The sequence spans 382 residues: Chorismate synthase (382 aa).

NADP(+) is bound by residues Arg39 and Arg45. FMN-binding positions include 128 to 130 (RAS), 246 to 247 (QA), Ala290, 305 to 309 (KPIAT), and Arg331.

The protein belongs to the chorismate synthase family. As to quaternary structure, homotetramer. FMNH2 is required as a cofactor.

It catalyses the reaction 5-O-(1-carboxyvinyl)-3-phosphoshikimate = chorismate + phosphate. Its pathway is metabolic intermediate biosynthesis; chorismate biosynthesis; chorismate from D-erythrose 4-phosphate and phosphoenolpyruvate: step 7/7. In terms of biological role, catalyzes the anti-1,4-elimination of the C-3 phosphate and the C-6 proR hydrogen from 5-enolpyruvylshikimate-3-phosphate (EPSP) to yield chorismate, which is the branch point compound that serves as the starting substrate for the three terminal pathways of aromatic amino acid biosynthesis. This reaction introduces a second double bond into the aromatic ring system. This Deinococcus geothermalis (strain DSM 11300 / CIP 105573 / AG-3a) protein is Chorismate synthase.